The primary structure comprises 202 residues: Adenosylcobalamin/alpha-ribazole phosphatase (202 aa).

The active-site Tele-phosphohistidine intermediate is the His8. Glu81 serves as the catalytic Proton donor/acceptor.

The protein belongs to the phosphoglycerate mutase family. As to quaternary structure, monomer.

The enzyme catalyses adenosylcob(III)alamin 5'-phosphate + H2O = adenosylcob(III)alamin + phosphate. It catalyses the reaction alpha-ribazole 5'-phosphate + H2O = alpha-ribazole + phosphate. The protein operates within nucleoside biosynthesis; alpha-ribazole biosynthesis; alpha-ribazole from 5,6-dimethylbenzimidazole: step 2/2. Catalyzes the conversion of adenosylcobalamin 5'-phosphate to adenosylcobalamin (vitamin B12); involved in the assembly of the nucleotide loop of cobalamin. Also catalyzes the hydrolysis of the phospho group from alpha-ribazole 5'-phosphate to form alpha-ribazole. In Salmonella typhimurium (strain LT2 / SGSC1412 / ATCC 700720), this protein is Adenosylcobalamin/alpha-ribazole phosphatase (cobC).